We begin with the raw amino-acid sequence, 244 residues long: 14-3-3 protein beta/alpha (244 aa).

Residue Met1 is modified to N-acetylmethionine. Residue Ser184 is modified to Phosphoserine.

Belongs to the 14-3-3 family. As to quaternary structure, homodimer, and heterodimer with other family members. Phosphorylated.

It localises to the cytoplasm. Adapter protein implicated in the regulation of a large spectrum of both general and specialized signaling pathways. Binds to a large number of partners, usually by recognition of a phosphoserine or phosphothreonine motif. Binding generally results in the modulation of the activity of the binding partner. In Gallus gallus (Chicken), this protein is 14-3-3 protein beta/alpha (YWHAB).